A 136-amino-acid chain; its full sequence is MSTAKLDDSTQRPLYGERIIKESKIICFENPNKKRIYEISIDLPEFTCKCPFSGYPDFAKLNIIYQPNLRVYELKSLKLYINNFRDIKISHEEVVNRIMDDLLSAGSPHWIHLNASFNPRGNVSMQLDIFSGQKKN.

Catalysis depends on cysteine 50, which acts as the Thioimide intermediate. Catalysis depends on aspartate 57, which acts as the Proton donor. Substrate contacts are provided by residues 72 to 74 and 91 to 92; these read YEL and HE.

Belongs to the GTP cyclohydrolase I family. QueF type 1 subfamily.

The protein localises to the cytoplasm. The enzyme catalyses 7-aminomethyl-7-carbaguanine + 2 NADP(+) = 7-cyano-7-deazaguanine + 2 NADPH + 3 H(+). Its pathway is tRNA modification; tRNA-queuosine biosynthesis. Catalyzes the NADPH-dependent reduction of 7-cyano-7-deazaguanine (preQ0) to 7-aminomethyl-7-deazaguanine (preQ1). This chain is NADPH-dependent 7-cyano-7-deazaguanine reductase, found in Prochlorococcus marinus (strain MIT 9215).